The primary structure comprises 117 residues: Appetite-regulating hormone (117 aa).

Positions 1-23 are cleaved as a signal peptide; sequence MVSSATICSLLLLSMLWMDMAMA. Residue Ser-26 is the site of O-decanoyl serine; alternate attachment. Residue Ser-26 is the site of O-hexanoyl serine; alternate attachment. Ser-26 carries the O-octanoyl serine; alternate lipid modification. A disordered region spans residues 28 to 68; it reads LSPEHQKAQQRKESKKPPAKLQPRALEGWLHPEDRGQAEEA. Residues 31–43 show a composition bias toward basic and acidic residues; sequence EHQKAQQRKESKK. Residues 52–75 constitute a propeptide, removed in mature form; sequence ALEGWLHPEDRGQAEEAEEELEIR. The residue at position 98 (Leu-98) is a Leucine amide. The propeptide at 99-117 is removed in mature form; the sequence is GKFLQDILWEEVKEAPANK.

The protein belongs to the motilin family. O-octanoylated by GOAT/MBOAT4. O-octanoylation is essential for ghrelin activity. The replacement of Ser-26 by aromatic tryptophan preserves ghrelin activity. In terms of processing, amidation of Leu-98 is essential for obestatin activity. Ghrelin is broadly expressed with higher expression in the stomach. Very low levels are detected in the hypothalamus, heart, lung, pancreas, intestine and adipose tissue. Obestatin is most highly expressed in jejunum, and also found in duodenum, stomach, pituitary, ileum, liver, hypothalamus and heart. Expressed in low levels in pancreas, cerebellum, cerebrum, kidney, testis, ovary colon and lung.

The protein resides in the secreted. Ghrelin is the ligand for growth hormone secretagogue receptor type 1 (GHSR). Induces the release of growth hormone from the pituitary. Has an appetite-stimulating effect, induces adiposity and stimulates gastric acid secretion. Involved in growth regulation. Its function is as follows. Obestatin may be the ligand for GPR39. May have an appetite-reducing effect resulting in decreased food intake. May reduce gastric emptying activity and jejunal motility. This is Appetite-regulating hormone (Ghrl) from Rattus norvegicus (Rat).